The chain runs to 326 residues: Metal-binding protein YtgA (326 aa).

A signal peptide spans 1-21 (MSFFHTRKYKLILRGLLCLAG). Residues histidine 75, histidine 141, histidine 207, and aspartate 299 each contribute to the Fe(2+) site.

This sequence belongs to the bacterial solute-binding protein 9 family. As to quaternary structure, monomer.

The protein localises to the periplasm. Functionally, part of the ATP-binding cassette (ABC) transport system YtgABCD involved in metal import. Binds Fe(2+), Mn(2+) and Ni(2+), with a preference for Fe(2+) and delivers them to the membrane permease for translocation into the cytoplasm. The chain is Metal-binding protein YtgA from Chlamydia trachomatis serovar D (strain ATCC VR-885 / DSM 19411 / UW-3/Cx).